Reading from the N-terminus, the 186-residue chain is ADP-ribosylation factor-like protein DDB_G0292332 (186 aa).

GTP contacts are provided by residues 24 to 31 (GVENVGKT), 78 to 82 (DIGGK), and 138 to 141 (NKQD).

This sequence belongs to the small GTPase superfamily. Arf family.

Its function is as follows. Binds and exchanges GTP and GDP. The polypeptide is ADP-ribosylation factor-like protein DDB_G0292332 (Dictyostelium discoideum (Social amoeba)).